We begin with the raw amino-acid sequence, 468 residues long: Abscisic acid 8'-hydroxylase 4 (468 aa).

Residues 4-24 (IWFLVVPILILCLLLVRVIVS) traverse the membrane as a helical segment. Cysteine 415 contacts heme.

Belongs to the cytochrome P450 family. The cofactor is heme. In terms of tissue distribution, mainly expressed in flowers. Lower expression in siliques, rosette leaves, roots and stems. Not expressed in dry seeds. Expressed in silique envelopes, but not in embryo or endosperm during the seed development.

Its subcellular location is the membrane. It catalyses the reaction 2-cis-(+)-abscisate + reduced [NADPH--hemoprotein reductase] + O2 = (+)-8'-hydroxyabscisate + oxidized [NADPH--hemoprotein reductase] + H2O + H(+). The protein operates within plant hormone degradation; abscisic acid degradation. In terms of biological role, involved in the oxidative degradation of abscisic acid, but not in the isomerization of the produced 8'-hydroxyabscisic acid (8'-OH-ABA) to (-)-phaseic acid (PA). This is Abscisic acid 8'-hydroxylase 4 (CYP707A4) from Arabidopsis thaliana (Mouse-ear cress).